The primary structure comprises 701 residues: Polyribonucleotide nucleotidyltransferase (701 aa).

Residues aspartate 487 and aspartate 493 each contribute to the Mg(2+) site. The KH domain maps to 554 to 613 (PTMIAMKIDTDKIRDVIGKGGATIRAICEETKASIDIEDDGSIKIFGESKEAAEAARQRV). The 69-residue stretch at 623–691 (GKIYVGKVER…NRGRIKLSIK (69 aa)) folds into the S1 motif domain.

It belongs to the polyribonucleotide nucleotidyltransferase family. Component of the RNA degradosome, which is a multiprotein complex involved in RNA processing and mRNA degradation. Requires Mg(2+) as cofactor.

Its subcellular location is the cytoplasm. It carries out the reaction RNA(n+1) + phosphate = RNA(n) + a ribonucleoside 5'-diphosphate. In terms of biological role, involved in mRNA degradation. Catalyzes the phosphorolysis of single-stranded polyribonucleotides processively in the 3'- to 5'-direction. The polypeptide is Polyribonucleotide nucleotidyltransferase (Pseudomonas savastanoi pv. phaseolicola (strain 1448A / Race 6) (Pseudomonas syringae pv. phaseolicola (strain 1448A / Race 6))).